The chain runs to 142 residues: Peptide methionine sulfoxide reductase MsrB (142 aa).

Residues 2–125 (LKKDKSELTD…NSAAIQFIPY (124 aa)) enclose the MsrB domain. Cysteine 114 (nucleophile) is an active-site residue.

Belongs to the MsrB Met sulfoxide reductase family.

The catalysed reaction is L-methionyl-[protein] + [thioredoxin]-disulfide + H2O = L-methionyl-(R)-S-oxide-[protein] + [thioredoxin]-dithiol. The polypeptide is Peptide methionine sulfoxide reductase MsrB (Staphylococcus aureus (strain bovine RF122 / ET3-1)).